The following is a 98-amino-acid chain: Small ribosomal subunit protein bS20 (98 aa).

The span at 1 to 12 shows a compositional bias: basic residues; sequence MAPRKPSKKVGP. The disordered stretch occupies residues 1–31; that stretch reads MAPRKPSKKVGPQKRPSAEKRVITSKKKQLR.

It belongs to the bacterial ribosomal protein bS20 family.

Its function is as follows. Binds directly to 16S ribosomal RNA. This chain is Small ribosomal subunit protein bS20, found in Chlamydia trachomatis serovar L2 (strain ATCC VR-902B / DSM 19102 / 434/Bu).